A 298-amino-acid polypeptide reads, in one-letter code: N-acetylmuramic acid 6-phosphate etherase (298 aa).

The SIS domain maps to 55-218 (ITESLRRGGR…STASMVRLGK (164 aa)). E83 (proton donor) is an active-site residue. E114 is a catalytic residue.

The protein belongs to the GCKR-like family. MurNAc-6-P etherase subfamily. Homodimer.

It carries out the reaction N-acetyl-D-muramate 6-phosphate + H2O = N-acetyl-D-glucosamine 6-phosphate + (R)-lactate. It functions in the pathway amino-sugar metabolism; N-acetylmuramate degradation. Functionally, specifically catalyzes the cleavage of the D-lactyl ether substituent of MurNAc 6-phosphate, producing GlcNAc 6-phosphate and D-lactate. In Mycolicibacterium smegmatis (strain ATCC 700084 / mc(2)155) (Mycobacterium smegmatis), this protein is N-acetylmuramic acid 6-phosphate etherase.